Reading from the N-terminus, the 255-residue chain is Pimeloyl-[acyl-carrier protein] methyl ester esterase (255 aa).

The 226-residue stretch at 16–241 (LVLLHGWGLN…AAHAPFISHP (226 aa)) folds into the AB hydrolase-1 domain. Residues W22, 81–82 (SL), and 142–146 (FLALQ) each bind substrate. S81 (nucleophile) is an active-site residue. Active-site residues include D206 and H234. H234 provides a ligand contact to substrate.

It belongs to the AB hydrolase superfamily. Carboxylesterase BioH family. In terms of assembly, monomer.

The protein localises to the cytoplasm. The catalysed reaction is 6-carboxyhexanoyl-[ACP] methyl ester + H2O = 6-carboxyhexanoyl-[ACP] + methanol + H(+). It participates in cofactor biosynthesis; biotin biosynthesis. Its function is as follows. The physiological role of BioH is to remove the methyl group introduced by BioC when the pimeloyl moiety is complete. It allows to synthesize pimeloyl-ACP via the fatty acid synthetic pathway through the hydrolysis of the ester bonds of pimeloyl-ACP esters. Also displays a weak thioesterase activity. Can form a complex with CoA, and may be involved in the condensation of CoA and pimelic acid into pimeloyl-CoA, a precursor in biotin biosynthesis. This chain is Pimeloyl-[acyl-carrier protein] methyl ester esterase, found in Serratia marcescens.